Reading from the N-terminus, the 428-residue chain is 3-oxo-tetronate kinase (428 aa).

ATP contacts are provided by residues serine 267, glycine 365–threonine 368, and glycine 409.

It belongs to the four-carbon acid sugar kinase family.

The catalysed reaction is 3-dehydro-L-erythronate + ATP = 3-dehydro-4-O-phospho-L-erythronate + ADP + H(+). It catalyses the reaction 3-dehydro-D-erythronate + ATP = 3-dehydro-4-O-phospho-D-erythronate + ADP + H(+). Catalyzes the ATP-dependent phosphorylation of 3-oxo-tetronate to 3-oxo-tetronate 4-phosphate. This Burkholderia multivorans (strain ATCC 17616 / 249) protein is 3-oxo-tetronate kinase.